We begin with the raw amino-acid sequence, 505 residues long: 2,3-bisphosphoglycerate-independent phosphoglycerate mutase (505 aa).

Positions 11 and 61 each coordinate Mn(2+). The active-site Phosphoserine intermediate is the Ser-61. Residues His-122, 152–153 (RD), Arg-184, Arg-190, 258–261 (RPDR), and Lys-331 each bind substrate. Mn(2+)-binding residues include Asp-396, His-400, Asp-437, His-438, and His-455.

The protein belongs to the BPG-independent phosphoglycerate mutase family. In terms of assembly, monomer. The cofactor is Mn(2+).

The enzyme catalyses (2R)-2-phosphoglycerate = (2R)-3-phosphoglycerate. The protein operates within carbohydrate degradation; glycolysis; pyruvate from D-glyceraldehyde 3-phosphate: step 3/5. In terms of biological role, catalyzes the interconversion of 2-phosphoglycerate and 3-phosphoglycerate. The protein is 2,3-bisphosphoglycerate-independent phosphoglycerate mutase of Mesomycoplasma hyopneumoniae (strain 7448) (Mycoplasma hyopneumoniae).